Here is a 544-residue protein sequence, read N- to C-terminus: Aspartokinase (544 aa).

In terms of domain architecture, ACT spans 463–535 (LVGKQMVNFI…SAIGDSSAVD (73 aa)).

It belongs to the aspartokinase family.

It catalyses the reaction L-aspartate + ATP = 4-phospho-L-aspartate + ADP. The protein operates within amino-acid biosynthesis; L-methionine biosynthesis via de novo pathway; L-homoserine from L-aspartate: step 1/3. It functions in the pathway amino-acid biosynthesis; L-threonine biosynthesis; L-threonine from L-aspartate: step 1/5. In terms of biological role, phosphorylates aspartate, the first step in the biosynthesis of amino acids that derive from aspartate (the aspartate family of amino acids), including methioinine and threonine, the latter of which is a precursor to isoleucine. The sequence is that of Aspartokinase from Candida albicans (strain SC5314 / ATCC MYA-2876) (Yeast).